Reading from the N-terminus, the 379-residue chain is MAPIIRKSHPLLKIINNSLIDLPSPSNISAWWNFGSLLGICLITQILTGLLLAMHYTADTSLAFSSIAHICRNVQYGWLIRNLHANGASFFFICIYFHIGRGFYYGSYLYKETWNTGIILLLTLMATAFVGYVLPWGQMSFWGATVITNLFSAIPYIGQTLVEWAWGGFSVDNPTLTRFFALHFLLPFLIAGITLIHLTFLHESGSNNPLGIISHCDKIPFHPYFSLKDILGFTLMLIPLLTLTFFSPNLLGDPENFTPANPLVTPPHIKPEWYFLFAYAILRSIPNKLGGVLALAASVLILFLTPLLHKSKQRSMAFRPFSQVLFWLLVANLLILTWVGSQPVEHPFIAIGQMASFTYFLILLVLFPMIGALENKMIY.

The next 4 helical transmembrane spans lie at F34–M54, W78–I99, W114–L134, and F179–T199. 2 residues coordinate heme b: H84 and H98. 2 residues coordinate heme b: H183 and H197. An a ubiquinone-binding site is contributed by H202. A run of 4 helical transmembrane segments spans residues L227–S247, L289–H309, F321–S341, and F348–P368.

Belongs to the cytochrome b family. The cytochrome bc1 complex contains 11 subunits: 3 respiratory subunits (MT-CYB, CYC1 and UQCRFS1), 2 core proteins (UQCRC1 and UQCRC2) and 6 low-molecular weight proteins (UQCRH/QCR6, UQCRB/QCR7, UQCRQ/QCR8, UQCR10/QCR9, UQCR11/QCR10 and a cleavage product of UQCRFS1). This cytochrome bc1 complex then forms a dimer. Heme b serves as cofactor.

Its subcellular location is the mitochondrion inner membrane. In terms of biological role, component of the ubiquinol-cytochrome c reductase complex (complex III or cytochrome b-c1 complex) that is part of the mitochondrial respiratory chain. The b-c1 complex mediates electron transfer from ubiquinol to cytochrome c. Contributes to the generation of a proton gradient across the mitochondrial membrane that is then used for ATP synthesis. The protein is Cytochrome b (MT-CYB) of Apteryx australis (Southern brown kiwi).